The chain runs to 200 residues: ATP-dependent Clp protease proteolytic subunit 2 (200 aa).

S99 serves as the catalytic Nucleophile. Residue H123 is part of the active site.

This sequence belongs to the peptidase S14 family. As to quaternary structure, fourteen ClpP subunits assemble into 2 heptameric rings which stack back to back to give a disk-like structure with a central cavity, resembling the structure of eukaryotic proteasomes.

The protein resides in the cytoplasm. It carries out the reaction Hydrolysis of proteins to small peptides in the presence of ATP and magnesium. alpha-casein is the usual test substrate. In the absence of ATP, only oligopeptides shorter than five residues are hydrolyzed (such as succinyl-Leu-Tyr-|-NHMec, and Leu-Tyr-Leu-|-Tyr-Trp, in which cleavage of the -Tyr-|-Leu- and -Tyr-|-Trp bonds also occurs).. Its function is as follows. Cleaves peptides in various proteins in a process that requires ATP hydrolysis. Has a chymotrypsin-like activity. Plays a major role in the degradation of misfolded proteins. The sequence is that of ATP-dependent Clp protease proteolytic subunit 2 from Symbiobacterium thermophilum (strain DSM 24528 / JCM 14929 / IAM 14863 / T).